The chain runs to 126 residues: uncharacterized protein (126 aa).

The interval 83–126 (VPPPLDRSHESPEEFFPPQNRNRGGGPKAQIQRHPPEALEKTTH) is disordered. The segment covering 116-126 (HPPEALEKTTH) has biased composition (basic and acidic residues).

This is an uncharacterized protein from Galliformes (FAdV-1).